A 389-amino-acid polypeptide reads, in one-letter code: 5-hydroxytryptamine receptor 1B (389 aa).

Positions 1-27 are disordered; that stretch reads MEAAGAPCAPPPPAGSQTGAPPANLSS. The Extracellular segment spans residues 1–45; the sequence is MEAAGAPCAPPPPAGSQTGAPPANLSSAPHNCSAEGYIYQDSVAL. Residues 16–27 show a composition bias toward polar residues; sequence SQTGAPPANLSS. N24 and N31 each carry an N-linked (GlcNAc...) asparagine glycan. Residues 46-71 traverse the membrane as a helical segment; sequence PWKVLLVILLALITLATTLSNAFVIA. Over 72-85 the chain is Cytoplasmic; sequence TVYRTRKLHTPANY. The chain crosses the membrane as a helical span at residues 86–110; it reads LIASLAVTDLLVSILVMPISTMYTV. Residues 111–118 lie on the Extracellular side of the membrane; that stretch reads TGRWTLGQ. Residues 119–144 form a helical membrane-spanning segment; sequence VVCDLWLSSDITCCTASILHLCVIAL. C121 and C198 are disulfide-bonded. Ergotamine-binding residues include D128 and T133. The short motif at 145–147 is the DRY motif; important for ligand-induced conformation changes and signaling element; it reads DRY. Residues 145–164 lie on the Cytoplasmic side of the membrane; sequence DRYWAITDAVEYSAKRTPKR. The helical transmembrane segment at 165-183 threads the bilayer; the sequence is AAVMIALVWVFSISISLPP. Over 184–204 the chain is Extracellular; it reads FFWRQAKAEEEVSDCVVNTDH. V200 contributes to the ergotamine binding site. A helical transmembrane segment spans residues 205–228; sequence ILYTVYSTVGAFYFPTLLLIALYG. The Cytoplasmic segment spans residues 229 to 314; that stretch reads RIYVEARSRI…AARERKATKT (86 aa). The segment covering 258–271 has biased composition (polar residues); sequence DSPGSTSSVTSVNS. Positions 258–281 are disordered; that stretch reads DSPGSTSSVTSVNSRAPDVPSESG. Residues 315–336 form a helical membrane-spanning segment; that stretch reads LGIILGAFIVCWLPFFIISLVM. The Extracellular portion of the chain corresponds to 337–346; the sequence is PICKDACWFH. The chain crosses the membrane as a helical span at residues 347–369; the sequence is LAIFDFFTWLGYLNSLINPIIYT. The NPxxY motif; important for ligand-induced conformation changes and signaling motif lies at 364–368; the sequence is NPIIY. The Cytoplasmic segment spans residues 370 to 389; it reads MSNEDFKQAFHKLIRFKCAG. A lipid anchor (S-palmitoyl cysteine) is attached at C387.

The protein belongs to the G-protein coupled receptor 1 family. In terms of assembly, homodimer. Heterodimer with HTR1D. Phosphorylated. Desensitization of the receptor may be mediated by its phosphorylation. Post-translationally, palmitoylated.

The protein localises to the cell membrane. In terms of biological role, G-protein coupled receptor for 5-hydroxytryptamine (serotonin). Also functions as a receptor for ergot alkaloid derivatives, various anxiolytic and antidepressant drugs and other psychoactive substances, such as lysergic acid diethylamide (LSD). Ligand binding causes a conformation change that triggers signaling via guanine nucleotide-binding proteins (G proteins) and modulates the activity of downstream effectors, such as adenylate cyclase. HTR1B is coupled to G(i)/G(o) G alpha proteins and mediates inhibitory neurotransmission by inhibiting adenylate cyclase activity. Arrestin family members inhibit signaling via G proteins and mediate activation of alternative signaling pathways. Regulates the release of 5-hydroxytryptamine, dopamine and acetylcholine in the brain, and thereby affects neural activity, nociceptive processing, pain perception, mood and behavior. Besides, plays a role in vasoconstriction of cerebral arteries. This chain is 5-hydroxytryptamine receptor 1B (HTR1B), found in Canis lupus familiaris (Dog).